Here is a 138-residue protein sequence, read N- to C-terminus: Large ribosomal subunit protein bL19 (138 aa).

The protein belongs to the bacterial ribosomal protein bL19 family.

Functionally, this protein is located at the 30S-50S ribosomal subunit interface and may play a role in the structure and function of the aminoacyl-tRNA binding site. This chain is Large ribosomal subunit protein bL19, found in Leptospira interrogans serogroup Icterohaemorrhagiae serovar copenhageni (strain Fiocruz L1-130).